The primary structure comprises 739 residues: Phosphoribosylformylglycinamidine synthase subunit PurL (739 aa).

Residue H54 is part of the active site. Y57 and K96 together coordinate ATP. E98 is a binding site for Mg(2+). Substrate-binding positions include 99-102 (SHNH) and R121. Residue H100 is the Proton acceptor of the active site. D122 contacts Mg(2+). Q245 provides a ligand contact to substrate. D275 contributes to the Mg(2+) binding site. 319–321 (ESQ) contacts substrate. Positions 504 and 541 each coordinate ATP. N542 contributes to the Mg(2+) binding site. Residue S544 participates in substrate binding.

This sequence belongs to the FGAMS family. Monomer. Part of the FGAM synthase complex composed of 1 PurL, 1 PurQ and 2 PurS subunits.

Its subcellular location is the cytoplasm. It carries out the reaction N(2)-formyl-N(1)-(5-phospho-beta-D-ribosyl)glycinamide + L-glutamine + ATP + H2O = 2-formamido-N(1)-(5-O-phospho-beta-D-ribosyl)acetamidine + L-glutamate + ADP + phosphate + H(+). Its pathway is purine metabolism; IMP biosynthesis via de novo pathway; 5-amino-1-(5-phospho-D-ribosyl)imidazole from N(2)-formyl-N(1)-(5-phospho-D-ribosyl)glycinamide: step 1/2. Its function is as follows. Part of the phosphoribosylformylglycinamidine synthase complex involved in the purines biosynthetic pathway. Catalyzes the ATP-dependent conversion of formylglycinamide ribonucleotide (FGAR) and glutamine to yield formylglycinamidine ribonucleotide (FGAM) and glutamate. The FGAM synthase complex is composed of three subunits. PurQ produces an ammonia molecule by converting glutamine to glutamate. PurL transfers the ammonia molecule to FGAR to form FGAM in an ATP-dependent manner. PurS interacts with PurQ and PurL and is thought to assist in the transfer of the ammonia molecule from PurQ to PurL. The polypeptide is Phosphoribosylformylglycinamidine synthase subunit PurL (Lactococcus lactis subsp. cremoris (Streptococcus cremoris)).